The primary structure comprises 397 residues: Purine nucleoside transport protein NupG (397 aa).

11 helical membrane-spanning segments follow: residues 1–21 (MYFLLNLVGLIVIMAVVFLCS), 32–52 (IITLIVLELLITWFMLGTKVG), 62–82 (FFTWLIACASDGIAFAFPSVM), 97–117 (IIFIVTFFDILTYFGILPWLI), 133–153 (LESFFSIQMMFLGNTEALAVI), 165–185 (LLTFGLMSMSSISGSIIGSYL), 187–207 (MVPATYVFTAIPLNCLNALII), 242–262 (MLVGMNMVIVILAMVIGYVAL), 282–302 (IFAYLFSPFAFLLGLPVHDAM), 335–355 (VAVATTFLTSFANFSTVGMIY), and 377–397 (LLVSGIAVSLLSAAIVGLFVW).

The protein belongs to the concentrative nucleoside transporter (CNT) (TC 2.A.41) family.

It localises to the cell membrane. Functionally, involved in the uptake of the purine ribonucleosides inosine and guanosine. In Bacillus subtilis (strain 168), this protein is Purine nucleoside transport protein NupG (nupG).